A 201-amino-acid chain; its full sequence is Envelope glycoprotein (201 aa).

Over 1–148 the chain is Extracellular; the sequence is RRARYKKEPV…FNKSPWFTTL (148 aa). The tract at residues 10-30 is fusion peptide; sequence VSLTLALLLGGLTMGGIAAGV. The stretch at 39–75 forms a coiled coil; that stretch reads ATQQFQQLQAAIHDDLKEVEKSITNLEKSLTSLSEVV. Residues 76–92 are immunosuppression; the sequence is LQNRRGLDLLFLKEGGL. The CX6CC signature appears at 93–101; that stretch reads CAALKEECC. The helical transmembrane segment at 149-169 threads the bilayer; that stretch reads ISTVMGPLIILLLILLFGPCI. Cys-168 carries the S-palmitoyl cysteine; by host lipid modification. Over 170–201 the chain is Cytoplasmic; that stretch reads LNRLVQFIKDRISVVQALVLTQQYHQLKTIGD. Positions 193–196 match the YXXL motif; contains endocytosis signal motif; the sequence is YHQL.

The mature envelope protein (Env) consists of a trimer of SU-TM heterodimers attached by a labile interchain disulfide bond. Specific enzymatic cleavages in vivo yield mature proteins. Envelope glycoproteins are synthesized as an inactive precursor that is N-glycosylated and processed likely by host cell furin or by a furin-like protease in the Golgi to yield the mature SU and TM proteins. The cleavage site between SU and TM requires the minimal sequence [KR]-X-[KR]-R. The R-peptide is released from the C-terminus of the cytoplasmic tail of the TM protein upon particle formation as a result of proteolytic cleavage by the viral protease. Cleavage of this peptide is required for TM to become fusogenic. Post-translationally, the transmembrane protein is palmitoylated. In terms of processing, the R-peptide is palmitoylated.

It is found in the virion membrane. The protein localises to the host cell membrane. Functionally, the surface protein (SU) attaches the virus to the host cell by binding to its receptor. This interaction triggers the refolding of the transmembrane protein (TM) and is thought to activate its fusogenic potential by unmasking its fusion peptide. Fusion occurs at the host cell plasma membrane. In terms of biological role, the transmembrane protein (TM) acts as a class I viral fusion protein. Under the current model, the protein has at least 3 conformational states: pre-fusion native state, pre-hairpin intermediate state, and post-fusion hairpin state. During viral and target cell membrane fusion, the coiled coil regions (heptad repeats) assume a trimer-of-hairpins structure, positioning the fusion peptide in close proximity to the C-terminal region of the ectodomain. The formation of this structure appears to drive apposition and subsequent fusion of viral and target cell membranes. Membranes fusion leads to delivery of the nucleocapsid into the cytoplasm. The chain is Envelope glycoprotein (env) from Mus musculus (Mouse).